Consider the following 227-residue polypeptide: MKSFPLPIKAVVIDLDGTLLNTAPDLAHAAELMMAELGRPCPSLETISTYIGNGVSRLVKRVLTGEMDAEPDPALFAQAIASYQKHYGEHVSLHSRPFDGVVEGLQAFKAMGLHMACITNKAEQFTVPLLKGTGLYDYFELILSGDTLPKRKPDPLPLLHACEVFGVAPAELLLIGDSLNDTQAARAAGCPVFCVPYGYNRGRPVTELDLDAVVPSLAEAALMVTKA.

Residue Asp14 is the Nucleophile of the active site. Asp14, Asp16, and Asp177 together coordinate Mg(2+).

The protein belongs to the HAD-like hydrolase superfamily. CbbY/CbbZ/Gph/YieH family. Requires Mg(2+) as cofactor.

It catalyses the reaction 2-phosphoglycolate + H2O = glycolate + phosphate. It functions in the pathway organic acid metabolism; glycolate biosynthesis; glycolate from 2-phosphoglycolate: step 1/1. Functionally, specifically catalyzes the dephosphorylation of 2-phosphoglycolate. Is involved in the dissimilation of the intracellular 2-phosphoglycolate formed during the DNA repair of 3'-phosphoglycolate ends, a major class of DNA lesions induced by oxidative stress. In Thiobacillus denitrificans (strain ATCC 25259 / T1), this protein is Phosphoglycolate phosphatase.